Here is a 301-residue protein sequence, read N- to C-terminus: NAD kinase 2 (301 aa).

The active-site Proton acceptor is the Asp77. Residues 77–78 (DG), Arg82, 151–152 (NE), Lys162, Asp181, and 192–197 (TAYAFS) contribute to the NAD(+) site.

This sequence belongs to the NAD kinase family. The cofactor is a divalent metal cation.

It localises to the cytoplasm. It catalyses the reaction NAD(+) + ATP = ADP + NADP(+) + H(+). Involved in the regulation of the intracellular balance of NAD and NADP, and is a key enzyme in the biosynthesis of NADP. Catalyzes specifically the phosphorylation on 2'-hydroxyl of the adenosine moiety of NAD to yield NADP. The chain is NAD kinase 2 from Streptomyces coelicolor (strain ATCC BAA-471 / A3(2) / M145).